A 442-amino-acid polypeptide reads, in one-letter code: Probable serine/threonine-protein kinase kinase DDB_G0280643 (442 aa).

Residues 74–398 (IDPNTIVDCG…VNEILESPYF (325 aa)) enclose the Protein kinase domain. Residues 80-88 (VDCGTNGIM) and lysine 103 contribute to the ATP site. Aspartate 231 serves as the catalytic Proton acceptor.

It belongs to the protein kinase superfamily. CMGC Ser/Thr protein kinase family. MAP kinase subfamily.

The catalysed reaction is L-seryl-[protein] + ATP = O-phospho-L-seryl-[protein] + ADP + H(+). It carries out the reaction L-threonyl-[protein] + ATP = O-phospho-L-threonyl-[protein] + ADP + H(+). This chain is Probable serine/threonine-protein kinase kinase DDB_G0280643, found in Dictyostelium discoideum (Social amoeba).